A 655-amino-acid chain; its full sequence is D-xylonate dehydratase YjhG (655 aa).

This sequence belongs to the IlvD/Edd family.

The catalysed reaction is D-xylonate = 2-dehydro-3-deoxy-D-arabinonate + H2O. Activity is increased in the presence of Mn(+) and Mg(2+). Inhibited by thiol compounds. In terms of biological role, catalyzes the dehydration of D-xylonic acid to form 2-dehydro-3-deoxy-D-pentonate. This Escherichia coli (strain K12) protein is D-xylonate dehydratase YjhG (yjhG).